The chain runs to 197 residues: Outer membrane protein 26 (197 aa).

The N-terminal stretch at 1-23 (MKNIAKVTALALGIALASGYASA) is a signal peptide.

Belongs to the Skp family.

The protein resides in the cell outer membrane. This is Outer membrane protein 26 (omp26) from Haemophilus influenzae (strain ATCC 51907 / DSM 11121 / KW20 / Rd).